A 118-amino-acid chain; its full sequence is MLNHYLPVLIFLLVALVVGVAPLLMGSSLGPHRPDSEKLSPYECGFEAFEDARMKFDVRYYLVAILFILFDLEIAFLFPWAVVFDQIGMTGFLAMMLFLAILVVGFIYEWKKGALEWE.

Helical transmembrane passes span leucine 6–glycine 26, alanine 64–phenylalanine 84, and isoleucine 87–isoleucine 107.

The protein belongs to the complex I subunit 3 family. NDH-1 is composed of 14 different subunits. Subunits NuoA, H, J, K, L, M, N constitute the membrane sector of the complex.

It is found in the cell inner membrane. It catalyses the reaction a quinone + NADH + 5 H(+)(in) = a quinol + NAD(+) + 4 H(+)(out). In terms of biological role, NDH-1 shuttles electrons from NADH, via FMN and iron-sulfur (Fe-S) centers, to quinones in the respiratory chain. The immediate electron acceptor for the enzyme in this species is believed to be ubiquinone. Couples the redox reaction to proton translocation (for every two electrons transferred, four hydrogen ions are translocated across the cytoplasmic membrane), and thus conserves the redox energy in a proton gradient. The protein is NADH-quinone oxidoreductase subunit A of Acidithiobacillus ferrooxidans (strain ATCC 53993 / BNL-5-31) (Leptospirillum ferrooxidans (ATCC 53993)).